The sequence spans 346 residues: 3-isopropylmalate dehydrogenase (346 aa).

76–87 (GPKWTDPNNRPE) lines the NAD(+) pocket. The substrate site is built by arginine 94, arginine 104, arginine 132, and aspartate 217. Positions 217, 241, and 245 each coordinate Mg(2+). 275–287 (GSAPDIANQDIAN) contributes to the NAD(+) binding site.

The protein belongs to the isocitrate and isopropylmalate dehydrogenases family. LeuB type 1 subfamily. Homodimer. The cofactor is Mg(2+). Mn(2+) serves as cofactor.

The protein resides in the cytoplasm. It carries out the reaction (2R,3S)-3-isopropylmalate + NAD(+) = 4-methyl-2-oxopentanoate + CO2 + NADH. The protein operates within amino-acid biosynthesis; L-leucine biosynthesis; L-leucine from 3-methyl-2-oxobutanoate: step 3/4. Its function is as follows. Catalyzes the oxidation of 3-carboxy-2-hydroxy-4-methylpentanoate (3-isopropylmalate) to 3-carboxy-4-methyl-2-oxopentanoate. The product decarboxylates to 4-methyl-2 oxopentanoate. This is 3-isopropylmalate dehydrogenase from Staphylococcus saprophyticus subsp. saprophyticus (strain ATCC 15305 / DSM 20229 / NCIMB 8711 / NCTC 7292 / S-41).